We begin with the raw amino-acid sequence, 272 residues long: Ribonuclease 3 (272 aa).

The segment at 1–22 (MSLQFLRSEASDGAGETSDASS) is disordered. The region spanning 31 to 162 (TATHLARLTG…LVGAIYLDQG (132 aa)) is the RNase III domain. Glu-75 provides a ligand contact to Mg(2+). The active site involves Asp-79. Asp-148 and Glu-151 together coordinate Mg(2+). Glu-151 is a catalytic residue. The 70-residue stretch at 189–258 (NYKSRLIEYT…AKEAMKRLES (70 aa)) folds into the DRBM domain.

It belongs to the ribonuclease III family. As to quaternary structure, homodimer. The cofactor is Mg(2+).

The protein localises to the cytoplasm. The catalysed reaction is Endonucleolytic cleavage to 5'-phosphomonoester.. Digests double-stranded RNA. Involved in the processing of primary rRNA transcript to yield the immediate precursors to the large and small rRNAs (23S and 16S). Processes some mRNAs, and tRNAs when they are encoded in the rRNA operon. Processes pre-crRNA and tracrRNA of type II CRISPR loci if present in the organism. The sequence is that of Ribonuclease 3 from Chlorobaculum tepidum (strain ATCC 49652 / DSM 12025 / NBRC 103806 / TLS) (Chlorobium tepidum).